We begin with the raw amino-acid sequence, 116 residues long: Large ribosomal subunit protein bL20 (116 aa).

This sequence belongs to the bacterial ribosomal protein bL20 family.

In terms of biological role, binds directly to 23S ribosomal RNA and is necessary for the in vitro assembly process of the 50S ribosomal subunit. It is not involved in the protein synthesizing functions of that subunit. This is Large ribosomal subunit protein bL20 (rplT) from Mycoplasmopsis fermentans (Mycoplasma fermentans).